Here is an 840-residue protein sequence, read N- to C-terminus: Homeobox-leucine zipper protein HOX9 (840 aa).

Disordered regions lie at residues 1 to 26 (MAAA…AGMD) and 135 to 160 (NPSL…DASN). A compositionally biased stretch (gly residues) spans 12 to 21 (GSDGGGGGYD). A DNA-binding region (homeobox) is located at residues 26-89 (DSGKYVRYTP…NRRCRDKQRK (64 aa)). Residues 86 to 135 (KQRKEASRLQAVNRKLTAMNKLLMEENERLQKQVSQLVHENAYMKQQLQN) are a coiled coil. The region spanning 157-385 (DASNPSGLLT…IAQETSGEVV (229 aa)) is the START domain.

It belongs to the HD-ZIP homeobox family. Class III subfamily. As to expression, expressed in seedlings, roots, stems, leaf sheaths and blades and panicles.

The protein localises to the nucleus. Its function is as follows. Probable transcription factor. This chain is Homeobox-leucine zipper protein HOX9 (HOX9), found in Oryza sativa subsp. indica (Rice).